Consider the following 396-residue polypeptide: DNA polymerase IV (396 aa).

A UmuC domain is found at 5 to 192; that stretch reads IFHVDVNSAF…LPVGELFMVG (188 aa). 2 residues coordinate Mg(2+): Asp-9 and Asp-111. Glu-112 is a catalytic residue.

It belongs to the DNA polymerase type-Y family. Monomer. Mg(2+) serves as cofactor.

The protein resides in the cytoplasm. It catalyses the reaction DNA(n) + a 2'-deoxyribonucleoside 5'-triphosphate = DNA(n+1) + diphosphate. Poorly processive, error-prone DNA polymerase involved in untargeted mutagenesis. Copies undamaged DNA at stalled replication forks, which arise in vivo from mismatched or misaligned primer ends. These misaligned primers can be extended by PolIV. Exhibits no 3'-5' exonuclease (proofreading) activity. May be involved in translesional synthesis, in conjunction with the beta clamp from PolIII. The protein is DNA polymerase IV of Clostridium acetobutylicum (strain ATCC 824 / DSM 792 / JCM 1419 / IAM 19013 / LMG 5710 / NBRC 13948 / NRRL B-527 / VKM B-1787 / 2291 / W).